The following is a 313-amino-acid chain: tRNA dimethylallyltransferase (313 aa).

Position 11 to 18 (11 to 18 (GPTACGKT)) interacts with ATP. 13 to 18 (TACGKT) provides a ligand contact to substrate. Interaction with substrate tRNA regions lie at residues 36-39 (DSAL), 160-164 (QRIGR), and 243-248 (RCVGYR).

This sequence belongs to the IPP transferase family. Monomer. Mg(2+) serves as cofactor.

The catalysed reaction is adenosine(37) in tRNA + dimethylallyl diphosphate = N(6)-dimethylallyladenosine(37) in tRNA + diphosphate. Functionally, catalyzes the transfer of a dimethylallyl group onto the adenine at position 37 in tRNAs that read codons beginning with uridine, leading to the formation of N6-(dimethylallyl)adenosine (i(6)A). The sequence is that of tRNA dimethylallyltransferase from Neisseria gonorrhoeae (strain NCCP11945).